A 213-amino-acid polypeptide reads, in one-letter code: Glycerol-3-phosphate acyltransferase (213 aa).

6 helical membrane passes run 2–22 (ITIV…GLWI), 52–74 (AGMA…PIIF), 81–100 (PLIF…FAGF), 112–132 (VIFG…FGAL), 143–163 (VTAS…GFIL), and 164–184 (SNYD…IIIR).

The protein belongs to the PlsY family. As to quaternary structure, probably interacts with PlsX.

It localises to the cell membrane. The catalysed reaction is an acyl phosphate + sn-glycerol 3-phosphate = a 1-acyl-sn-glycero-3-phosphate + phosphate. It participates in lipid metabolism; phospholipid metabolism. Functionally, catalyzes the transfer of an acyl group from acyl-phosphate (acyl-PO(4)) to glycerol-3-phosphate (G3P) to form lysophosphatidic acid (LPA). This enzyme utilizes acyl-phosphate as fatty acyl donor, but not acyl-CoA or acyl-ACP. The sequence is that of Glycerol-3-phosphate acyltransferase from Streptococcus pneumoniae (strain ATCC 700669 / Spain 23F-1).